The sequence spans 320 residues: ATP-dependent 6-phosphofructokinase (320 aa).

Glycine 11 serves as a coordination point for ATP. 21–25 contacts ADP; that stretch reads RAVVR. Residues 72 to 73 and 102 to 105 contribute to the ATP site; these read RC and GDGS. Aspartate 103 lines the Mg(2+) pocket. Substrate is bound at residue 125–127; the sequence is TID. Aspartate 127 serves as the catalytic Proton acceptor. ADP is bound at residue arginine 154. Substrate contacts are provided by residues arginine 162 and 169-171; that span reads MGR. ADP contacts are provided by residues 185–187 and 214–216; these read GAE and KTH. Substrate-binding positions include glutamate 223, arginine 244, and 250–253; that span reads HIQR.

The protein belongs to the phosphofructokinase type A (PFKA) family. ATP-dependent PFK group I subfamily. Prokaryotic clade 'B1' sub-subfamily. Homotetramer. Requires Mg(2+) as cofactor.

Its subcellular location is the cytoplasm. The enzyme catalyses beta-D-fructose 6-phosphate + ATP = beta-D-fructose 1,6-bisphosphate + ADP + H(+). It participates in carbohydrate degradation; glycolysis; D-glyceraldehyde 3-phosphate and glycerone phosphate from D-glucose: step 3/4. With respect to regulation, allosterically activated by ADP and other diphosphonucleosides, and allosterically inhibited by phosphoenolpyruvate. Its function is as follows. Catalyzes the phosphorylation of D-fructose 6-phosphate to fructose 1,6-bisphosphate by ATP, the first committing step of glycolysis. The polypeptide is ATP-dependent 6-phosphofructokinase (Clostridium botulinum (strain Alaska E43 / Type E3)).